Consider the following 511-residue polypeptide: Ribonuclease E/G-like protein (511 aa).

The 83-residue stretch at 35–117 (SDIYLGTVDK…LTANITLSGR (83 aa)) folds into the S1 motif domain. Asp296 and Asp339 together coordinate Mg(2+).

Belongs to the RNase E/G family. It depends on Mg(2+) as a cofactor.

The protein resides in the plastid. It localises to the chloroplast stroma. Its function is as follows. Involved in intercistronic processing of primary transcripts from chloroplast operons. The endonucleolytic activity of the enzyme depends on the number of phosphates at the 5' end, is inhibited by structured RNA, and preferentially cleaves A/U-rich sequences. In Porphyra purpurea (Red seaweed), this protein is Ribonuclease E/G-like protein (rne).